Consider the following 593-residue polypeptide: MSYSKSTIYRRQGTEPNSHFRRTVEEKSQLSGTNEESLGGHTLSSNAFKNNSSSISPSSSAKDPREQRKRTFPLNDTHSSRARQHERPFRSRKSRRRKGKKAFSPRPGSPPSPSFYRSGSQKRARNLTTKDYFAKRSESSSSASVSPISPSANRNDSKRQASSFRRSPPSSVHMKPSAFNGRKVSRRPSSSPPPIPSIPHETTSSDTQKKSSVSSGFPENKHGKFHFHIPNERRSRFDQPPSKRMALTSTARESVPAPLPSPPSGPIYTYTYPKPAYEKIDQIGEGTYGKVYKAINTVTGDLVALKRIRLEQEKDGFPITTVREVKILQRLRHKNIVRLLEIMVEKSSVYMVFEYMDHDLTGVLLNSQLHFTPGNIKHLSKQIFEALAYLHHRGVLHRDIKGSNILLNNNGDLKFADFGLARFNTSSKSANYTNRVITLWFRPPELLLGETAYDTAVDIWSAGCIVMELFTGKPFFQGRDEISQLEVIYDMMGTPDVHSWPEVKNLPWYELLKPVEEKKSRFVETFKEILSPAAIDLCQKLLALNPFCRPSAHETLMHEYFTSESPPPEPAVILKNMQGSWHEWESKKRKSKR.

Polar residues-rich tracts occupy residues 1–17 (MSYS…TEPN) and 29–51 (QLSG…FKNN). The segment at 1–262 (MSYSKSTIYR…ESVPAPLPSP (262 aa)) is disordered. Residues Ser56 and Ser58 each carry the phosphoserine modification. A compositionally biased stretch (basic residues) spans 90-103 (RSRKSRRRKGKKAF). Phosphoserine is present on residues Ser104 and Ser109. Positions 139–152 (SSSSASVSPISPSA) are enriched in low complexity. Over residues 160–170 (QASSFRRSPPS) the composition is skewed to polar residues. The segment covering 198-215 (IPHETTSSDTQKKSSVSS) has biased composition (low complexity). One can recognise a Protein kinase domain in the interval 277 to 561 (YEKIDQIGEG…AHETLMHEYF (285 aa)). ATP is bound by residues 283–291 (IGEGTYGKV) and Lys306. Residue Asp399 is the Proton acceptor of the active site.

The protein belongs to the protein kinase superfamily. CMGC Ser/Thr protein kinase family. CDC2/CDKX subfamily. CTDK-I consists of three subunits, ctk1/lsk1, ctk2/lsc1 and ctk3 (also called alpha, beta and gamma). Interacts with ctk2/lsc1. This interaction is dependent on kinase activity.

Its subcellular location is the nucleus. It localises to the nucleolus. The catalysed reaction is [DNA-directed RNA polymerase] + ATP = phospho-[DNA-directed RNA polymerase] + ADP + H(+). Its function is as follows. Catalytic subunit of the CTDK-I complex, which hyperphosphorylates the C-terminal heptapeptide repeat domain (CTD) of the largest RNA polymerase II subunit. Involved in RNA polymerase II transcriptional elongation and pre-mRNA 3'-end processing. Together with ctk2/lsc1, required for the regulation of cytokinesis by phosphorylating 'Ser-2' residues found in the heptad repeats of the CTD. Required for nuclear localization of ctk2/lsc1. Positively regulates the septation initiation network (SIN) and promotes successful completion of cytokinesis in response to perturbation of the actomyosin ring. Acts in parallel to clp1 to promote actomyosin ring stability upon cytokinesis checkpoint activation. The protein is CTD kinase subunit alpha of Schizosaccharomyces pombe (strain 972 / ATCC 24843) (Fission yeast).